A 295-amino-acid chain; its full sequence is Protease HtpX homolog (295 aa).

A run of 2 helical transmembrane segments spans residues 6-26 and 40-60; these read IGLFLLTNILVVVTISIVTSV and LSSLLVFCFLWGMGGAFVSLL. His148 provides a ligand contact to Zn(2+). Residue Glu149 is part of the active site. A Zn(2+)-binding site is contributed by His152. Transmembrane regions (helical) follow at residues 163-183 and 198-218; these read LIQGVVNAFVMFFSRIISYAL and IANIVLSILFSILGSIIVAYF. Residue Glu223 participates in Zn(2+) binding.

The protein belongs to the peptidase M48B family. Requires Zn(2+) as cofactor.

Its subcellular location is the cell inner membrane. This Leptospira interrogans serogroup Icterohaemorrhagiae serovar copenhageni (strain Fiocruz L1-130) protein is Protease HtpX homolog.